The sequence spans 692 residues: Elongation factor G (692 aa).

The region spanning 8 to 283 is the tr-type G domain; it reads NRIRNIGIAA…AVIDYLPAPT (276 aa). GTP contacts are provided by residues 17–24, 81–85, and 135–138; these read AHIDAGKT, DTPGH, and NKMD.

Belongs to the TRAFAC class translation factor GTPase superfamily. Classic translation factor GTPase family. EF-G/EF-2 subfamily.

The protein localises to the cytoplasm. Catalyzes the GTP-dependent ribosomal translocation step during translation elongation. During this step, the ribosome changes from the pre-translocational (PRE) to the post-translocational (POST) state as the newly formed A-site-bound peptidyl-tRNA and P-site-bound deacylated tRNA move to the P and E sites, respectively. Catalyzes the coordinated movement of the two tRNA molecules, the mRNA and conformational changes in the ribosome. The sequence is that of Elongation factor G from Helicobacter pylori (strain P12).